The following is a 660-amino-acid chain: Putative ABC transporter ATP-binding MG390 homolog (660 aa).

Residues 6–126 form the Peptidase C39 domain; sequence QEQPNECGIC…KQWTGYAATV (121 aa). Cys-12 is a catalytic residue. 6 helical membrane-spanning segments follow: residues 150–170, 188–208, 265–285, 290–310, 379–399, and 402–422; these read LIIFYVFIELIIIGISTLLAT, IVVFVVFFLVLKGLYLLLYAL, HIPNLIISCTVALIIGTLIGI, FLWIAIVQIVVNCAIFLYDFF, SFAQQVFDFLILALGIIGIIE, and YTLAFLFYIFSIQALFSAYAT. Residues 464–660 form the ABC transporter domain; sequence INLNNCSITL…INLSPYLQQT (197 aa). 494 to 501 contacts ATP; that stretch reads GENGSGKS.

It belongs to the ABC transporter superfamily.

The protein resides in the cell membrane. In Mycoplasma pneumoniae (strain ATCC 29342 / M129 / Subtype 1) (Mycoplasmoides pneumoniae), this protein is Putative ABC transporter ATP-binding MG390 homolog.